A 388-amino-acid polypeptide reads, in one-letter code: Chorismate synthase (388 aa).

Residues Arg-39 and Arg-45 each coordinate NADP(+). FMN contacts are provided by residues 132–134, 251–252, Gly-296, 311–315, and Arg-337; these read RSS, NA, and KPIPT.

It belongs to the chorismate synthase family. As to quaternary structure, homotetramer. The cofactor is FMNH2.

It catalyses the reaction 5-O-(1-carboxyvinyl)-3-phosphoshikimate = chorismate + phosphate. It functions in the pathway metabolic intermediate biosynthesis; chorismate biosynthesis; chorismate from D-erythrose 4-phosphate and phosphoenolpyruvate: step 7/7. Catalyzes the anti-1,4-elimination of the C-3 phosphate and the C-6 proR hydrogen from 5-enolpyruvylshikimate-3-phosphate (EPSP) to yield chorismate, which is the branch point compound that serves as the starting substrate for the three terminal pathways of aromatic amino acid biosynthesis. This reaction introduces a second double bond into the aromatic ring system. This Staphylococcus epidermidis (strain ATCC 35984 / DSM 28319 / BCRC 17069 / CCUG 31568 / BM 3577 / RP62A) protein is Chorismate synthase.